Reading from the N-terminus, the 509-residue chain is MDAKLLLLPFPSPPATLHHHPPPPKSLFLGASLPLLHPPPPLRLLRPGAPRRLAVVAQAAVKRRKEIPFDNVIQRDKKLKLVLKLRNILVSNPDRVMSLRDLGRFRRDLGLTRKRRLIALLKRFPGVFEVVEEGVYSLRFRLTPAAERLYLDELHLKNESEGLAVTKLRKLLMMSQDKRILIEKIAHLKNDLGLPPEFRDTICLRYPQYFRVVQMDRGPGLELTHWDPELAVSAAEVAEEENRAREEQERNLIIDRPLKFNRVKLPQGLKLSRGEARRVAQFKEMPYISPYSDFSHLRSGSAEKEKHACGVVHEILSLTLEKRTLVDHLTHFREEFRFSQSLRGMLIRHPDMFYVSLKGDRDSVFLREAYKNSQLVEKSKLVLLKEKMRALVAVPRFPRRGVPATSEEADRTNGAAQMLSEGSDVEDDEDEGLSDMEDLISEISGGKSDTDYHWGDGWVGENDDSPPDFEDDDGSSLKEVKVTMKKTANSANGKAHVPVFPDGRPRERW.

Residues 1–56 (MDAKLLLLPFPSPPATLHHHPPPPKSLFLGASLPLLHPPPPLRLLRPGAPRRLAVV) constitute a chloroplast transit peptide. The region spanning 65–393 (KEIPFDNVIQ…LKEKMRALVA (329 aa)) is the PORR domain. 2 disordered regions span residues 402 to 431 (VPAT…DEDE) and 444 to 509 (SGGK…RERW). Residues 461 to 474 (ENDDSPPDFEDDDG) show a composition bias toward acidic residues.

The protein resides in the plastid. The protein localises to the chloroplast. Functionally, RNA-binding protein involved in group II intron splicing. Binds specific group II introns and promotes their splicing. Functions in the context of a heterodimer with the ribonuclease III domain-containing protein RNC1. In Oryza sativa subsp. japonica (Rice), this protein is Protein WHAT'S THIS FACTOR 1 homolog, chloroplastic.